We begin with the raw amino-acid sequence, 131 residues long: Single-stranded DNA-binding protein 2 (131 aa).

Positions 1–103 constitute an SSB domain; that stretch reads MYNKVIMIGR…VLASSFQLLE (103 aa). Positions 126 to 131 match the Important for interaction with partner proteins motif; the sequence is EEELPF.

As to quaternary structure, homotetramer.

Functionally, plays an important role in DNA replication, recombination and repair. Binds to ssDNA and to an array of partner proteins to recruit them to their sites of action during DNA metabolism. The protein is Single-stranded DNA-binding protein 2 (ssb2) of Streptococcus agalactiae serotype V (strain ATCC BAA-611 / 2603 V/R).